The primary structure comprises 556 residues: Potassium-transporting ATPase potassium-binding subunit (556 aa).

Transmembrane regions (helical) follow at residues 6–26 (AGLIFLAVLVAALVVVHVPLG), 65–85 (GVLAFSSVSIIFLFVLQLVQG), 133–153 (GLAVQNFVSAAVGMAVAVALV), 176–196 (LRILLPISIVGAVLLVAGGAI), 249–269 (PTAWTNWLEIFLILVIGFSLP), 283–303 (YAIASVMASLYLLSTGFMLWF), 378–398 (GLYGMLVLAVITVFVAGLMVG), 419–439 (YFLVTPLIVLTGTAIAMALPG), 483–503 (ALGLAMAFGRFLPIVLVLALA), and 526–546 (FVGMVAGVTLIVVALTFLPML).

The protein belongs to the KdpA family. As to quaternary structure, the system is composed of three essential subunits: KdpA, KdpB and KdpC.

The protein localises to the cell membrane. Part of the high-affinity ATP-driven potassium transport (or Kdp) system, which catalyzes the hydrolysis of ATP coupled with the electrogenic transport of potassium into the cytoplasm. This subunit binds the extracellular potassium ions and delivers the ions to the membrane domain of KdpB through an intramembrane tunnel. This Mycobacterium avium (strain 104) protein is Potassium-transporting ATPase potassium-binding subunit.